Reading from the N-terminus, the 558-residue chain is CTP synthase (558 aa).

Positions 1 to 267 are amidoligase domain; that stretch reads MAKFVFVTGG…CLEMLDVLNL (267 aa). S13 contributes to the CTP binding site. Residue S13 participates in UTP binding. ATP is bound by residues 14–19 and D71; that span reads SIGKGI. 2 residues coordinate Mg(2+): D71 and E141. Residues 148–150, 188–193, and K224 each bind CTP; these read DIE and KTKPTQ. Residues 188–193 and K224 contribute to the UTP site; that span reads KTKPTQ. The Glutamine amidotransferase type-1 domain occupies 292–534; the sequence is KVALVGKYVQ…IEAAQLRLPA (243 aa). G354 contacts L-glutamine. C381 serves as the catalytic Nucleophile; for glutamine hydrolysis. L-glutamine contacts are provided by residues 382–385, E405, and R462; that span reads LGMQ. Active-site residues include H507 and E509. Residues 536-558 are disordered; it reads PDEALRRQSQTNISAQEKPSRIG. Positions 542–552 are enriched in polar residues; that stretch reads RQSQTNISAQE.

It belongs to the CTP synthase family. As to quaternary structure, homotetramer.

It carries out the reaction UTP + L-glutamine + ATP + H2O = CTP + L-glutamate + ADP + phosphate + 2 H(+). The enzyme catalyses L-glutamine + H2O = L-glutamate + NH4(+). It catalyses the reaction UTP + NH4(+) + ATP = CTP + ADP + phosphate + 2 H(+). Its pathway is pyrimidine metabolism; CTP biosynthesis via de novo pathway; CTP from UDP: step 2/2. Its activity is regulated as follows. Allosterically activated by GTP, when glutamine is the substrate; GTP has no effect on the reaction when ammonia is the substrate. The allosteric effector GTP functions by stabilizing the protein conformation that binds the tetrahedral intermediate(s) formed during glutamine hydrolysis. Inhibited by the product CTP, via allosteric rather than competitive inhibition. Its function is as follows. Catalyzes the ATP-dependent amination of UTP to CTP with either L-glutamine or ammonia as the source of nitrogen. Regulates intracellular CTP levels through interactions with the four ribonucleotide triphosphates. In Prochlorococcus marinus (strain MIT 9303), this protein is CTP synthase.